The following is a 936-amino-acid chain: Isoleucine--tRNA ligase (936 aa).

Positions 58–68 (PYANGRAHLGT) match the 'HIGH' region motif. An L-isoleucyl-5'-AMP-binding site is contributed by Glu-561. The 'KMSKS' region signature appears at 602 to 606 (KMSKS). Residue Lys-605 participates in ATP binding. Cys-899, Cys-902, Cys-919, and Cys-922 together coordinate Zn(2+).

It belongs to the class-I aminoacyl-tRNA synthetase family. IleS type 1 subfamily. In terms of assembly, monomer. It depends on Zn(2+) as a cofactor.

Its subcellular location is the cytoplasm. The catalysed reaction is tRNA(Ile) + L-isoleucine + ATP = L-isoleucyl-tRNA(Ile) + AMP + diphosphate. In terms of biological role, catalyzes the attachment of isoleucine to tRNA(Ile). As IleRS can inadvertently accommodate and process structurally similar amino acids such as valine, to avoid such errors it has two additional distinct tRNA(Ile)-dependent editing activities. One activity is designated as 'pretransfer' editing and involves the hydrolysis of activated Val-AMP. The other activity is designated 'posttransfer' editing and involves deacylation of mischarged Val-tRNA(Ile). The sequence is that of Isoleucine--tRNA ligase from Coxiella burnetii (strain RSA 331 / Henzerling II).